We begin with the raw amino-acid sequence, 568 residues long: Protein phosphatase 1 regulatory inhibitor subunit 16B (568 aa).

Residues 15–55 adopt a coiled-coil conformation; sequence EKVPTLERLRAAQKRRAQQLKKWAQYEQDLLHRKRKHERKR. S69 is subject to Phosphoserine. ANK repeat units follow at residues 100–129, 133–162, 228–257, and 261–290; these read DGLTALHQCCIDNFEEIVKLLLSHGANVNA, ELWTPLHAAATCGHINLVKILVQYGADLLA, QGATLLHIAGANGYLRAAELLLDHGVRVDV, and DGWEPLHAAAFWGQMPMAELLVSHGASLSA. 3 positions are modified to phosphoserine: S333, S337, and S350. The segment at 373-403 is disordered; that stretch reads SAAEDQRTSTYNGDIRETRTDQENKDPNPRL. The span at 386–403 shows a compositional bias: basic and acidic residues; the sequence is DIRETRTDQENKDPNPRL. The residue at position 477 (S477) is a Phosphoserine. The span at 505–517 shows a compositional bias: low complexity; that stretch reads SSVARSGESSSEG. Residues 505–527 form a disordered region; it reads SSVARSGESSSEGKAPLIGGRTS. An ANK 5 repeat occupies 531–560; it reads SNGTSVYYTVTSGDPPLLKFKAPMEEMEEK. C564 is lipidated: S-palmitoyl cysteine. Residue C565 is modified to Cysteine methyl ester. The S-farnesyl cysteine moiety is linked to residue C565. A propeptide spans 566–568 (removed in mature form); that stretch reads RIS.

Interacts with PPP1CA, PPP1CB and MSN. Interacts (via its fourth ankyrin repeat) with the mature dimeric form of RPSA/LAMR1. Interacts with EEF1A1. Interacts with PTEN. Interacts with ECE1. Post-translationally, phosphorylated by PKA and, after PKA priming, by GSK3B. Phosphorylation by GSK3B reduces its association with PP1C and enhances PP1C activity. Dephosphorylation by its associated PP1C results in enhanced association with PP1C, but reduced PP1C activity.

It is found in the cell membrane. Its subcellular location is the nucleus. The protein resides in the cell projection. In terms of biological role, regulator of protein phosphatase 1 (PP1) that acts as a positive regulator of pulmonary endothelial cell (EC) barrier function. Protects the endothelial barrier from lipopolysaccharide (LPS)-induced vascular leakage. Involved in the regulation of the PI3K/AKT signaling pathway. Involved in the regulation of angiogenesis and endothelial cell proliferation through the control of ECE1 dephosphorylation, trafficking and activity. Involved in the regulation of endothelial cell filopodia extension. May be a downstream target for TGF-beta1 signaling cascade in endothelial cells. Involved in PKA-mediated moesin dephosphorylation which is important in EC barrier protection against thrombin stimulation. Promotes the interaction of PPP1CA with RPSA/LAMR1 and in turn facilitates the dephosphorylation of RPSA/LAMR1. Involved in the dephosphorylation of EEF1A1. The polypeptide is Protein phosphatase 1 regulatory inhibitor subunit 16B (Ppp1r16b) (Mus musculus (Mouse)).